The primary structure comprises 266 residues: Glucosamine-6-phosphate deaminase (266 aa).

Aspartate 72 functions as the Proton acceptor; for enolization step in the catalytic mechanism. Aspartate 141 acts as the For ring-opening step in catalysis. Histidine 143 acts as the Proton acceptor; for ring-opening step in catalysis. Catalysis depends on glutamate 148, which acts as the For ring-opening step.

It belongs to the glucosamine/galactosamine-6-phosphate isomerase family. NagB subfamily. As to quaternary structure, homohexamer.

It catalyses the reaction alpha-D-glucosamine 6-phosphate + H2O = beta-D-fructose 6-phosphate + NH4(+). The protein operates within amino-sugar metabolism; N-acetylneuraminate degradation; D-fructose 6-phosphate from N-acetylneuraminate: step 5/5. Its activity is regulated as follows. Allosterically activated by N-acetylglucosamine 6-phosphate (GlcNAc6P). Its function is as follows. Catalyzes the reversible isomerization-deamination of glucosamine 6-phosphate (GlcN6P) to form fructose 6-phosphate (Fru6P) and ammonium ion. This is Glucosamine-6-phosphate deaminase from Yersinia pestis bv. Antiqua (strain Antiqua).